Consider the following 443-residue polypeptide: Exodeoxyribonuclease 7 large subunit (443 aa).

This sequence belongs to the XseA family. Heterooligomer composed of large and small subunits.

It is found in the cytoplasm. It catalyses the reaction Exonucleolytic cleavage in either 5'- to 3'- or 3'- to 5'-direction to yield nucleoside 5'-phosphates.. Its function is as follows. Bidirectionally degrades single-stranded DNA into large acid-insoluble oligonucleotides, which are then degraded further into small acid-soluble oligonucleotides. The polypeptide is Exodeoxyribonuclease 7 large subunit (Vibrio vulnificus (strain CMCP6)).